A 1346-amino-acid polypeptide reads, in one-letter code: Pikromycin polyketide synthase component PikAIV (1346 aa).

Residues 3–32 (SSNEQLVDALRASLKENEELRKESRRRADR) adopt a coiled-coil conformation. The region spanning 34-461 (QEPMAIVGMS…GTNAHVVLEE (428 aa)) is the Ketosynthase family 3 (KS3) domain. The module 6 stretch occupies residues 37-1332 (MAIVGMSCRF…HAPAVAEAVL (1296 aa)). Active-site for beta-ketoacyl synthase activity residues include cysteine 207, histidine 342, and histidine 382. An acyltransferase region spans residues 562-844 (FVFPGQGTQW…VLTMTLPDKV (283 aa)). Serine 652 functions as the Acyl-ester intermediate; for acyltransferase activity in the catalytic mechanism. Residues 945 to 1020 (SAVLAMVMRQ…ALAERISDEL (76 aa)) form the Carrier domain. Serine 980 is subject to O-(pantetheine 4'-phosphoryl)serine. Residues 1028 to 1050 (AEPSDHEQAEEEKAAAPAGARSG) form a disordered region. The segment covering 1030-1041 (PSDHEQAEEEKA) has biased composition (basic and acidic residues). Threonine 1125 contributes to the substrate binding site. The tract at residues 1127–1332 (ANGGPHEFLR…HAPAVAEAVL (206 aa)) is thioesterase. The active-site Nucleophile; for thioesterase activity is the serine 1196. Substrate is bound by residues glycine 1197 and aspartate 1224. Catalysis depends on histidine 1316, which acts as the Proton acceptor; for thioesterase activity.

In terms of assembly, homodimer. Pikromycin PKS consists of a combination of multimodular (PikAI and PikAII) and monomodular (PikAIII and PikAIV) polypeptides each coding for a functional synthase subunit which participates in 1 (monomodular) or 2 (multimodular) of the six FAS-like elongation steps required for formation of the polyketide. Module 1, 2, 3, 4, 5, and 6 participating in biosynthesis steps 1, 2, 3, 4, 5, and 6, respectively. Pantetheine 4'-phosphate is required as a cofactor.

The enzyme catalyses 5 (S)-methylmalonyl-CoA + malonyl-CoA + 5 NADPH + 11 H(+) = 10-deoxymethynolide + 6 CO2 + 5 NADP(+) + 6 CoA + 2 H2O. It carries out the reaction 6 (S)-methylmalonyl-CoA + malonyl-CoA + 5 NADPH + 12 H(+) = narbonolide + 7 CO2 + 5 NADP(+) + 7 CoA + 2 H2O. It participates in antibiotic biosynthesis. With respect to regulation, irreversibly inhibited by (2S,3R,4S)-2,4-dihydroxy-3-methylhexyl-phosphonic acid and (3R,4S)-4-hydroxy-3-methyl-2-oxohexyl-phosphonic acid. In terms of biological role, involved in the biosynthesis of 12- and 14-membered ring macrolactone antibiotics such as methymycin and neomethymycin, and pikromycin and narbomycin, respectively. Component of the pikromycin PKS which catalyzes the biosynthesis of both precursors 10-deoxymethynolide (12-membered ring macrolactone) and narbonolide (14-membered ring macrolactone). Chain elongation through PikAI, PikAII and PikAIII followed by thioesterase catalyzed termination results in the production of 10-deoxymethynolide, while continued elongation through PikAIV, followed by thioesterase (TE) catalyzed cyclization results in the biosynthesis of the narbonolide. The thioesterase can use a series of diketide-N-acetylcysteamine (SNAC) thioesters, but has a strong preference for the 2-methyl-3-ketopentanoyl-SNAC over the stereoisomers of 2-methyl-3-hydroxyacyl-SNAC. This chain is Pikromycin polyketide synthase component PikAIV, found in Streptomyces venezuelae.